The primary structure comprises 515 residues: Galactose/methyl galactoside import ATP-binding protein MglA (515 aa).

2 consecutive ABC transporter domains span residues 8–243 (LEMR…VGRE) and 254–499 (IPKE…AKYL). 40-47 (GENGAGKS) provides a ligand contact to ATP.

The protein belongs to the ABC transporter superfamily. Galactose/methyl galactoside importer (TC 3.A.1.2.3) family. As to quaternary structure, the complex is composed of one ATP-binding protein (MglA), two transmembrane proteins (MglC) and a solute-binding protein (MglB).

The protein localises to the cell membrane. The enzyme catalyses D-galactose(out) + ATP + H2O = D-galactose(in) + ADP + phosphate + H(+). It carries out the reaction methyl beta-D-galactoside(out) + ATP + H2O = methyl beta-D-galactoside(in) + ADP + phosphate + H(+). In terms of biological role, part of the ABC transporter complex MglABC involved in galactose/methyl galactoside import. Responsible for energy coupling to the transport system. The sequence is that of Galactose/methyl galactoside import ATP-binding protein MglA from Clostridium perfringens (strain 13 / Type A).